Consider the following 321-residue polypeptide: Sideroflexin-1-3 (321 aa).

Transmembrane regions (helical) follow at residues 101–121 (IITG…FWQW), 146–168 (LVTS…NHAV), 174–194 (LLGR…NIPC), 220–240 (AAVV…IPGM), and 266–286 (IQTL…CAFF).

The protein belongs to the sideroflexin family.

It is found in the mitochondrion membrane. Its function is as follows. Mitochondrial amino-acid transporter that mediates transport of serine into mitochondria. This is Sideroflexin-1-3 from Drosophila melanogaster (Fruit fly).